A 518-amino-acid chain; its full sequence is ATP synthase subunit beta 2 (518 aa).

154 to 161 (GGAGVGKT) is a binding site for ATP. The disordered stretch occupies residues 455 to 518 (IDEAKGKAKP…TDHAADTHES (64 aa)). Composition is skewed to basic and acidic residues over residues 473-485 (PDSK…DPKP) and 507-518 (PETDHAADTHES).

This sequence belongs to the ATPase alpha/beta chains family. As to quaternary structure, F-type ATPases have 2 components, CF(1) - the catalytic core - and CF(0) - the membrane proton channel. CF(1) has five subunits: alpha(3), beta(3), gamma(1), delta(1), epsilon(1). CF(0) has three main subunits: a(1), b(2) and c(9-12). The alpha and beta chains form an alternating ring which encloses part of the gamma chain. CF(1) is attached to CF(0) by a central stalk formed by the gamma and epsilon chains, while a peripheral stalk is formed by the delta and b chains.

The protein localises to the cell inner membrane. It catalyses the reaction ATP + H2O + 4 H(+)(in) = ADP + phosphate + 5 H(+)(out). In terms of biological role, produces ATP from ADP in the presence of a proton gradient across the membrane. The catalytic sites are hosted primarily by the beta subunits. The protein is ATP synthase subunit beta 2 of Albidiferax ferrireducens (strain ATCC BAA-621 / DSM 15236 / T118) (Rhodoferax ferrireducens).